The chain runs to 363 residues: Proline/serine-rich coiled-coil protein 1 (363 aa).

Ser-22 is modified (phosphoserine). Repeat unit 1 spans residues 38–41 (PEKP). The disordered stretch occupies residues 39–67 (EKPLRRGLSHRSDPNAVAPAPQGVRLSLG). Leu-42 bears the Phosphoserine mark. Position 45 is a phosphothreonine (Gly-45). Phosphoserine occurs at positions 47, 65, 70, 98, 122, and 140. Repeat 2 spans residues 68–71 (PLSP). Residues 70–94 (SPEKLEEILDEANRLAAQLEQCALQ) are a coiled coil. Positions 95-363 (DRESAGEGLG…RKVAVPGPTR (269 aa)) are disordered. A 4 X 4 AA repeats of P-X-X-P region spans residues 103–246 (LGPRRVKPSP…HPSPPGPPTP (144 aa)). A compositionally biased stretch (basic and acidic residues) spans 112 to 124 (PRRETFVLKDSPV). Over residues 133–148 (SLTRSTPSPSSLTPRL) the composition is skewed to low complexity. A Phosphothreonine modification is found at Thr-145. Phosphoserine occurs at positions 186 and 190. Polar residues predominate over residues 186–196 (SPASSPLTRST). A compositionally biased stretch (low complexity) spans 197 to 210 (PPVRGRAGPSGRAA). Ser-212 is subject to Phosphoserine. Thr-215 carries the post-translational modification Phosphothreonine. Tandem repeats lie at residues 238–241 (PSPP) and 243–246 (PPTP).

Belongs to the PSRC1 family. In terms of assembly, interacts with APC2. Interacts with KIF2A. Interacts with ANKRD53; recruits ANKRD53 to the spindle during mitosis. Phosphorylated during mitosis. As to expression, widely expressed in adult and fetal tissues, with highest expression in the adult brain and fetal thymus. Not detected in adult skeletal muscle.

It is found in the cytoplasm. It localises to the cytoskeleton. The protein resides in the spindle. The protein localises to the spindle pole. Its function is as follows. Required for normal progression through mitosis. Required for normal congress of chromosomes at the metaphase plate, and for normal rate of chromosomal segregation during anaphase. Plays a role in the regulation of mitotic spindle dynamics. Increases the rate of turnover of microtubules on metaphase spindles, and contributes to the generation of normal tension across sister kinetochores. Recruits KIF2A and ANKRD53 to the mitotic spindle and spindle poles. May participate in p53/TP53-regulated growth suppression. The sequence is that of Proline/serine-rich coiled-coil protein 1 (PSRC1) from Homo sapiens (Human).